Consider the following 1079-residue polypeptide: Lon protease homolog, mitochondrial (1079 aa).

A mitochondrion-targeting transit peptide spans 1–60 (MLRPRTYVRKLAWRCPRKSQLGLRLATSVSSHKSLPLPMNFDISHSQSAFRAYQDIIHRN). Over residues 61 to 116 (KSVGDDEPSQRSENENNPSESDKDSNQDPETPKKDKESENDKEPEKEKDIENDNKV) the composition is skewed to basic and acidic residues. Disordered stretches follow at residues 61 to 158 (KSVG…VDPV) and 262 to 285 (LTTP…ESFP). Over residues 117 to 131 (SSESNENVTLASSNT) the composition is skewed to polar residues. The segment covering 132-143 (GGAAPPNGNNNG) has biased composition (low complexity). The 227-residue stretch at 165–391 (LLAIPMKDRP…RALELLKVEL (227 aa)) folds into the Lon N-terminal domain. A compositionally biased stretch (basic and acidic residues) spans 262–281 (LTTPSSEKEAKSEEPSKEDA). ATP is bound at residue 543–550 (GPPGTGKT). Residues 756–765 (ALDSSKEKEG) show a composition bias toward basic and acidic residues. The tract at residues 756 to 832 (ALDSSKEKEG…SEEDQQPEPK (77 aa)) is disordered. Low complexity predominate over residues 768–779 (ASSEEANVNSES). Residues 780-802 (TKSNTSQAEPVAESSTDISTKSK) show a composition bias toward polar residues. Positions 803 to 818 (VASEKIETKEKKETNK) are enriched in basic and acidic residues. One can recognise a Lon proteolytic domain in the interval 865–1053 (FPPPGVATGL…QEVFDKIFPN (189 aa)). Residues Ser959 and Lys1002 contribute to the active site.

It belongs to the peptidase S16 family. As to quaternary structure, homohexamer or homoheptamer. Organized in a ring with a central cavity.

It is found in the mitochondrion matrix. The enzyme catalyses Hydrolysis of proteins in presence of ATP.. In terms of biological role, ATP-dependent serine protease that mediates the selective degradation of misfolded, unassembled or oxidatively damaged polypeptides as well as certain short-lived regulatory proteins in the mitochondrial matrix. May also have a chaperone function in the assembly of inner membrane protein complexes. Participates in the regulation of mitochondrial gene expression and in the maintenance of the integrity of the mitochondrial genome. Binds to mitochondrial DNA in a site-specific manner. In Debaryomyces hansenii (strain ATCC 36239 / CBS 767 / BCRC 21394 / JCM 1990 / NBRC 0083 / IGC 2968) (Yeast), this protein is Lon protease homolog, mitochondrial.